A 435-amino-acid polypeptide reads, in one-letter code: Gamma-glutamyl phosphate reductase (435 aa).

Belongs to the gamma-glutamyl phosphate reductase family.

The protein resides in the cytoplasm. It catalyses the reaction L-glutamate 5-semialdehyde + phosphate + NADP(+) = L-glutamyl 5-phosphate + NADPH + H(+). Its pathway is amino-acid biosynthesis; L-proline biosynthesis; L-glutamate 5-semialdehyde from L-glutamate: step 2/2. Functionally, catalyzes the NADPH-dependent reduction of L-glutamate 5-phosphate into L-glutamate 5-semialdehyde and phosphate. The product spontaneously undergoes cyclization to form 1-pyrroline-5-carboxylate. The polypeptide is Gamma-glutamyl phosphate reductase (Synechococcus sp. (strain CC9605)).